The primary structure comprises 38 residues: Large ribosomal subunit protein bL36B (38 aa).

The protein belongs to the bacterial ribosomal protein bL36 family.

The polypeptide is Large ribosomal subunit protein bL36B (Prochlorococcus marinus (strain MIT 9515)).